A 353-amino-acid polypeptide reads, in one-letter code: Protein MGF 360-11L (353 aa).

Residues 59–88 form an ANK repeat; that stretch reads ELNTVLMKAAKENNHDLIRLFVEWGADINY.

Belongs to the asfivirus MGF 360 family. As to quaternary structure, interacts with host TBK1 ad IRF7.

In terms of biological role, plays a role in virus cell tropism, and may be required for efficient virus replication in macrophages. In addition, inhibits the phosphorylation of host TBK1 and IRF7 and thereby negatively regulates the host cGAS signaling pathway and antagonizes IFN-mediated antiviral activity. The protein is Protein MGF 360-11L of African swine fever virus (isolate Pig/Kenya/KEN-50/1950) (ASFV).